The chain runs to 353 residues: Photosystem II D2 protein (353 aa).

T2 is subject to N-acetylthreonine. Residue T2 is modified to Phosphothreonine. Residues 41–61 traverse the membrane as a helical segment; sequence CAYFSLGGWFTGTTFVTSWYT. H118 contributes to the chlorophyll a binding site. Residues 125–141 form a helical membrane-spanning segment; the sequence is GFMLRQFELARSVQLRP. The pheophytin a site is built by Q130 and N143. Residues 153-166 traverse the membrane as a helical segment; sequence VFVSVFLIYPLGQS. Residue H198 coordinates chlorophyll a. The chain crosses the membrane as a helical span at residues 208–228; the sequence is AALLCAIHGATVENTLFEDGD. H215 and F262 together coordinate a plastoquinone. H215 serves as a coordination point for Fe cation. Position 269 (H269) interacts with Fe cation. Residues 279 to 295 traverse the membrane as a helical segment; the sequence is GLWMSAIGVVGLALNLR.

It belongs to the reaction center PufL/M/PsbA/D family. As to quaternary structure, PSII is composed of 1 copy each of membrane proteins PsbA, PsbB, PsbC, PsbD, PsbE, PsbF, PsbH, PsbI, PsbJ, PsbK, PsbL, PsbM, PsbT, PsbX, PsbY, PsbZ, Psb30/Ycf12, at least 3 peripheral proteins of the oxygen-evolving complex and a large number of cofactors. It forms dimeric complexes. It depends on The D1/D2 heterodimer binds P680, chlorophylls that are the primary electron donor of PSII, and subsequent electron acceptors. It shares a non-heme iron and each subunit binds pheophytin, quinone, additional chlorophylls, carotenoids and lipids. There is also a Cl(-1) ion associated with D1 and D2, which is required for oxygen evolution. The PSII complex binds additional chlorophylls, carotenoids and specific lipids. as a cofactor.

Its subcellular location is the plastid. The protein localises to the chloroplast thylakoid membrane. The enzyme catalyses 2 a plastoquinone + 4 hnu + 2 H2O = 2 a plastoquinol + O2. Its function is as follows. Photosystem II (PSII) is a light-driven water:plastoquinone oxidoreductase that uses light energy to abstract electrons from H(2)O, generating O(2) and a proton gradient subsequently used for ATP formation. It consists of a core antenna complex that captures photons, and an electron transfer chain that converts photonic excitation into a charge separation. The D1/D2 (PsbA/PsbD) reaction center heterodimer binds P680, the primary electron donor of PSII as well as several subsequent electron acceptors. D2 is needed for assembly of a stable PSII complex. The polypeptide is Photosystem II D2 protein (Physcomitrium patens (Spreading-leaved earth moss)).